The following is a 225-amino-acid chain: Phosphoserine phosphatase (225 aa).

Met1 bears the N-acetylmethionine mark. Catalysis depends on Asp20, which acts as the Nucleophile. Residues Asp20 and Asp22 each coordinate Mg(2+). Asp20 to Asp22 is a binding site for L-serine. Asp22 (proton donor) is an active-site residue. Met52 is a binding site for O-phospho-L-serine. Gly53 provides a ligand contact to phosphate. L-serine is bound by residues Ser109 to Gly111 and Lys158. Residues Ser109–Gly111 and Lys158 each bind O-phospho-L-serine. Asp179 is a binding site for Mg(2+). Thr182 serves as a coordination point for O-phospho-L-serine. Thr182 contacts phosphate.

This sequence belongs to the HAD-like hydrolase superfamily. SerB family. In terms of assembly, homodimer. Requires Mg(2+) as cofactor.

Its subcellular location is the cytoplasm. The protein resides in the cytosol. The catalysed reaction is O-phospho-L-serine + H2O = L-serine + phosphate. The enzyme catalyses O-phospho-D-serine + H2O = D-serine + phosphate. It functions in the pathway amino-acid biosynthesis; L-serine biosynthesis; L-serine from 3-phospho-D-glycerate: step 3/3. Catalyzes the last irreversible step in the biosynthesis of L-serine from carbohydrates, the dephosphorylation of O-phospho-L-serine to L-serine. L-serine can then be used in protein synthesis, to produce other amino acids, in nucleotide metabolism or in glutathione synthesis, or can be racemized to D-serine, a neuromodulator. May also act on O-phospho-D-serine. The sequence is that of Phosphoserine phosphatase from Rattus norvegicus (Rat).